A 387-amino-acid chain; its full sequence is F-box only protein 4 (387 aa).

3 positions are modified to phosphoserine: Ser11, Ser12, and Ser48. The F-box domain occupies 56 to 102 (ASSLTRLPIDVQLYILSFLSPHDLCQLGSTSRYWNETVRDPILWRYF).

Homodimer. Part of the SCF (SKP1-CUL1-F-box) E3 ubiquitin-protein ligase complex SCF(FBXO4) formed of CUL1, SKP1, RBX1 and FBXO4. Interacts with TERF1; this interaction is prevented in the presence of GNL3L. Identified in a complex with CRYAB and CCND1. In terms of processing, phosphorylation at Ser-11 varies during the cell cycle. It is low in resting cells and high in the S phase and the G2/M phase of the cell cycle. Phosphorylation is decreased during late G1 phase. Phosphorylation at Ser-11 promotes homodimerization and is necessary for optimal ubiquitin ligase activity towards CCND1.

The protein resides in the cytoplasm. Its pathway is protein modification; protein ubiquitination. Substrate recognition component of a SCF (SKP1-CUL1-F-box protein) E3 ubiquitin-protein ligase complex that mediates the ubiquitination and subsequent proteasomal degradation of target proteins. Promotes ubiquitination of cyclin-D1 (CCND1) and its subsequent proteasomal degradation. However, it does not act as a major regulator of CCND1 stability during the G1/S transition. Recognizes TERF1 and promotes its ubiquitination together with UBE2D1. Promotes ubiquitination of FXR1 following phosphorylation of FXR1 by GSK3B, leading to FXR1 degradation by the proteasome. This chain is F-box only protein 4 (FBXO4), found in Bos taurus (Bovine).